A 94-amino-acid polypeptide reads, in one-letter code: Large ribosomal subunit protein bL28 (94 aa).

It belongs to the bacterial ribosomal protein bL28 family.

The protein is Large ribosomal subunit protein bL28 of Maricaulis maris (strain MCS10) (Caulobacter maris).